Here is a 93-residue protein sequence, read N- to C-terminus: YcgL domain-containing protein Ssed_2518 (93 aa).

A YcgL domain is found at 1–85; that stretch reads MICAVYKSRR…PKVNLLEQHK (85 aa).

The polypeptide is YcgL domain-containing protein Ssed_2518 (Shewanella sediminis (strain HAW-EB3)).